We begin with the raw amino-acid sequence, 119 residues long: MKRIAFVFSTAPHGTAAGREGLDALLATSALTDDLAVFFIADGVFQLLPGQKPDAVLARDYIATFKLLGLYDIEQCWVCAASLRERGLDPQTPFVVEATPLEADALRRELANYDVILRF.

This sequence belongs to the DsrF/TusC family. Heterohexamer, formed by a dimer of trimers. The hexameric TusBCD complex contains 2 copies each of TusB, TusC and TusD. The TusBCD complex interacts with TusE.

The protein localises to the cytoplasm. Functionally, part of a sulfur-relay system required for 2-thiolation of 5-methylaminomethyl-2-thiouridine (mnm(5)s(2)U) at tRNA wobble positions. This is Protein TusC from Shigella sonnei (strain Ss046).